The sequence spans 257 residues: Adenosylcobinamide-GDP ribazoletransferase (257 aa).

6 helical membrane passes run 4-24 (AVRG…WWLG), 40-60 (VVGL…QWFF), 64-84 (FVVQ…LLHL), 116-136 (AAVA…AALL), 140-160 (AALA…ALLI), and 193-213 (LFVT…VVAV).

It belongs to the CobS family. Mg(2+) serves as cofactor.

The protein localises to the cell inner membrane. The enzyme catalyses alpha-ribazole + adenosylcob(III)inamide-GDP = adenosylcob(III)alamin + GMP + H(+). The catalysed reaction is alpha-ribazole 5'-phosphate + adenosylcob(III)inamide-GDP = adenosylcob(III)alamin 5'-phosphate + GMP + H(+). Its pathway is cofactor biosynthesis; adenosylcobalamin biosynthesis; adenosylcobalamin from cob(II)yrinate a,c-diamide: step 7/7. Its function is as follows. Joins adenosylcobinamide-GDP and alpha-ribazole to generate adenosylcobalamin (Ado-cobalamin). Also synthesizes adenosylcobalamin 5'-phosphate from adenosylcobinamide-GDP and alpha-ribazole 5'-phosphate. The chain is Adenosylcobinamide-GDP ribazoletransferase from Alkalilimnicola ehrlichii (strain ATCC BAA-1101 / DSM 17681 / MLHE-1).